Reading from the N-terminus, the 352-residue chain is Cuticle collagen dpy-17 (352 aa).

The signal sequence occupies residues Met1–Gln29. Residues Arg61 to Arg64 form a furin-like endopeptidase recognition region region. 2 disordered regions span residues Gly73–Asp143 and Gly156–Asn352. The span at Gly87–Gln97 shows a compositional bias: gly residues. Triple-helical region regions lie at residues Gly156 to Asp182, Gly202 to His264, Gly267 to Arg290, and Gly294 to Asp329. The Collagen-like domain maps to Gly202 to Gly259. Positions Pro207–Gly259 are enriched in low complexity. The segment covering Gln337–Asn352 has biased composition (polar residues).

Belongs to the cuticular collagen family. Collagen polypeptide chains are complexed within the cuticle by disulfide bonds and other types of covalent cross-links.

It localises to the secreted. Its subcellular location is the extracellular space. Its function is as follows. Secreted collagen that forms part of the nematode cuticle, which functions as an exoskeleton and a barrier to protect the worm from its environment. Secretion and subsequent incorporation into the cuticle is likely mediated by bli-4, which probably cleaves at the N-terminal consensus furin cleavage site. This is Cuticle collagen dpy-17 from Caenorhabditis elegans.